We begin with the raw amino-acid sequence, 235 residues long: Claudin-16 (235 aa).

Over 1–3 (MKD) the chain is Cytoplasmic. Residues 4–24 (LLQYAACFLAIFSTGFLIVAT) form a helical membrane-spanning segment. Residues 25–79 (WTDCWMVNADDSLEVSTKCRGLWWECVTNAFDGIRTCDEYDSIYAEHPLKLVVTR) lie on the Extracellular side of the membrane. A helical membrane pass occupies residues 80-100 (ALMITADILAGFGFITLLLGL). Residues 101–115 (DCVKFLPDDPQIKVR) lie on the Cytoplasmic side of the membrane. A helical membrane pass occupies residues 116–136 (LCFVAGTTLLIAGTPGIIGSV). The Extracellular segment spans residues 137-169 (WYAVDVYVERSSLVLHNIFLGIQYKFGWSCWLG). The chain crosses the membrane as a helical span at residues 170–190 (MAGSLGCFLAGALLTCCLYLF). Over 191–235 (KDVGPERNYPYAMRKPYSTAGVSMAKSYKAPRTETAKMYAVDTRV) the chain is Cytoplasmic. The Interaction with TJP1 signature appears at 233-235 (TRV).

This sequence belongs to the claudin family. Can form heteropolymeric tight junction strands with other claudins. Interacts with CLDN19. Cannot form tight junction strands on its own. Interacts (via PDZ-binding motif TRV) with TJP1 (via PDZ domain). As to expression, expressed in the corticomedullary axis of the TAL, specifically in the cortex and the outer stripe of outer medulla (OSOM) zone (at protein level).

The protein resides in the cell junction. The protein localises to the tight junction. It is found in the cell membrane. The enzyme catalyses Mg(2+)(in) = Mg(2+)(out). It catalyses the reaction Ca(2+)(in) = Ca(2+)(out). The catalysed reaction is Na(+)(in) = Na(+)(out). It carries out the reaction K(+)(in) = K(+)(out). The enzyme catalyses Rb(+)(in) = Rb(+)(out). It catalyses the reaction Cs(+)(in) = Cs(+)(out). The catalysed reaction is Li(+)(in) = Li(+)(out). Forms paracellular channels: coassembles with CLDN19 into tight junction strands with cation-selective channels through the strands, conveying epithelial permeability in a process known as paracellular tight junction permeability. Involved in the maintenance of ion gradients along the nephron. In the thick ascending limb (TAL) of Henle's loop, facilitates sodium paracellular permeability from the interstitial compartment to the lumen, contributing to the lumen-positive transepithelial potential that drives paracellular magnesium and calcium reabsorption. This Mus musculus (Mouse) protein is Claudin-16.